The chain runs to 381 residues: E3 ubiquitin-protein ligase KCMF1 (381 aa).

Position 2 is an N-acetylserine (Ser2). Position 2 is a phosphoserine (Ser2). The ZZ-type zinc finger occupies 4 to 60 (HEGVSCDACLKGNFRGRRYKCLICYDYDLCASCYESGATTTRHTTDHPMQCILTRVD). The Zn(2+) site is built by Cys9, Cys12, Cys24, Cys27, Cys33, Cys36, His46, and His50. A C2H2-type zinc finger spans residues 78 to 101 (FTCPYCGKMGYTETSLQEHVTSEH). The segment at 154–193 (MFHPGRGLGGPRARRSNMHFTSSSTGGLSSSQSSYSPSNR) is disordered. Ser169, Ser189, and Ser212 each carry phosphoserine. The segment covering 175–191 (SSSTGGLSSSQSSYSPS) has biased composition (low complexity). Residues 225–257 (SQLQQLQMQLQLERQHAQAARQQLETARNATRR) are a coiled coil. The disordered stretch occupies residues 294–314 (TRLNDPKMSETERQSMESERA). Positions 297 to 314 (NDPKMSETERQSMESERA) are enriched in basic and acidic residues. Residues Ser335 and Ser336 each carry the phosphoserine modification.

It belongs to the KCMF1 family. Component of the SIFI complex, composed of KCMF1, UBR4 and calmodulin (CALM1, CALM2 or CALM3). In terms of tissue distribution, spleen, small intestine, ovary, peripheral blood, lung, kidney and pancreas. Expressed at low levels in the thymus, prostate, testis, colon, heart, brain, placenta and liver.

It is found in the cytoplasm. The protein localises to the late endosome. It localises to the lysosome. The enzyme catalyses S-ubiquitinyl-[E2 ubiquitin-conjugating enzyme]-L-cysteine + [acceptor protein]-L-lysine = [E2 ubiquitin-conjugating enzyme]-L-cysteine + N(6)-ubiquitinyl-[acceptor protein]-L-lysine.. The protein operates within protein modification; protein ubiquitination. E3 ubiquitin-protein ligase which accepts ubiquitin from an E2 ubiquitin-conjugating enzyme and then transfers it to targeted substrates, promoting their degradation by the proteasome. Together with UBR4, component of the N-end rule pathway: ubiquitinates proteins bearing specific N-terminal residues that are destabilizing according to the N-end rule, leading to their degradation. Does not ubiquitinate proteins that are acetylated at the N-terminus. Together with UBR4, part of a protein quality control pathway that catalyzes ubiquitination and degradation of proteins that have been oxidized in response to reactive oxygen species (ROS): recognizes proteins with an Arg-CysO3(H) degron at the N-terminus, and mediates assembly of heterotypic 'Lys-63'-/'Lys-27'-linked branched ubiquitin chains on oxidized proteins, leading to their degradation by autophagy. Catalytic component of the SIFI complex, a multiprotein complex required to inhibit the mitochondrial stress response after a specific stress event has been resolved: ubiquitinates and degrades (1) components of the HRI-mediated signaling of the integrated stress response, such as DELE1 and EIF2AK1/HRI, as well as (2) unimported mitochondrial precursors. Within the SIFI complex, UBR4 initiates ubiquitin chain that are further elongated or branched by KCMF1. The polypeptide is E3 ubiquitin-protein ligase KCMF1 (Homo sapiens (Human)).